The following is a 416-amino-acid chain: Gamma-glutamyl phosphate reductase (416 aa).

The protein belongs to the gamma-glutamyl phosphate reductase family.

Its subcellular location is the cytoplasm. It carries out the reaction L-glutamate 5-semialdehyde + phosphate + NADP(+) = L-glutamyl 5-phosphate + NADPH + H(+). Its pathway is amino-acid biosynthesis; L-proline biosynthesis; L-glutamate 5-semialdehyde from L-glutamate: step 2/2. In terms of biological role, catalyzes the NADPH-dependent reduction of L-glutamate 5-phosphate into L-glutamate 5-semialdehyde and phosphate. The product spontaneously undergoes cyclization to form 1-pyrroline-5-carboxylate. The polypeptide is Gamma-glutamyl phosphate reductase (Streptococcus pyogenes serotype M49 (strain NZ131)).